The primary structure comprises 182 residues: Adenine phosphoribosyltransferase (182 aa).

Belongs to the purine/pyrimidine phosphoribosyltransferase family. As to quaternary structure, homodimer.

The protein localises to the cytoplasm. It catalyses the reaction AMP + diphosphate = 5-phospho-alpha-D-ribose 1-diphosphate + adenine. Its pathway is purine metabolism; AMP biosynthesis via salvage pathway; AMP from adenine: step 1/1. Its function is as follows. Catalyzes a salvage reaction resulting in the formation of AMP, that is energically less costly than de novo synthesis. This is Adenine phosphoribosyltransferase from Campylobacter jejuni subsp. doylei (strain ATCC BAA-1458 / RM4099 / 269.97).